The following is a 267-amino-acid chain: MLKIGLVGCGAIASLITKALMSDRLNKAEVLAFYDGNLEKAEKLAMETGADFCKSLDELVSKDLDLIVECASVNAVEDTVIKSLNNDKDVIIMSVGAFADKDLFVKLYKLAEKLGKKIYVPSGAVAGIDAVKSGSLGKISEVSLTTTKPVHGLKSALEEQGLNTDEIKEPKIVFEGTVFDAISKFPQNINVSVVLSLASRYPAKVKIIADPNAVVNRHEILVKGSIGTIKTCVENNPCRDNPKTSALAAYSVIRLIKDLSEPVRIGT.

The NAD(+) site is built by Ala-124 and Asn-190. His-218 is an active-site residue.

The protein belongs to the L-aspartate dehydrogenase family.

It carries out the reaction L-aspartate + NADP(+) + H2O = oxaloacetate + NH4(+) + NADPH + H(+). The catalysed reaction is L-aspartate + NAD(+) + H2O = oxaloacetate + NH4(+) + NADH + H(+). Its pathway is cofactor biosynthesis; NAD(+) biosynthesis; iminoaspartate from L-aspartate (dehydrogenase route): step 1/1. In terms of biological role, specifically catalyzes the NAD or NADP-dependent dehydrogenation of L-aspartate to iminoaspartate. The sequence is that of L-aspartate dehydrogenase from Methanococcus maripaludis (strain DSM 14266 / JCM 13030 / NBRC 101832 / S2 / LL).